We begin with the raw amino-acid sequence, 306 residues long: UDP-N-acetylenolpyruvoylglucosamine reductase (306 aa).

One can recognise an FAD-binding PCMH-type domain in the interval 34 to 198 (VGGPADLLIT…LEVTFKLHNS (165 aa)). The active site involves Arg177. Ser227 (proton donor) is an active-site residue. Glu297 is a catalytic residue.

This sequence belongs to the MurB family. It depends on FAD as a cofactor.

The protein localises to the cytoplasm. It carries out the reaction UDP-N-acetyl-alpha-D-muramate + NADP(+) = UDP-N-acetyl-3-O-(1-carboxyvinyl)-alpha-D-glucosamine + NADPH + H(+). The protein operates within cell wall biogenesis; peptidoglycan biosynthesis. Its function is as follows. Cell wall formation. This is UDP-N-acetylenolpyruvoylglucosamine reductase from Clostridium botulinum (strain Okra / Type B1).